A 143-amino-acid chain; its full sequence is ATP synthase epsilon chain (143 aa).

Belongs to the ATPase epsilon chain family. In terms of assembly, F-type ATPases have 2 components, CF(1) - the catalytic core - and CF(0) - the membrane proton channel. CF(1) has five subunits: alpha(3), beta(3), gamma(1), delta(1), epsilon(1). CF(0) has three main subunits: a, b and c.

The protein localises to the cell membrane. Produces ATP from ADP in the presence of a proton gradient across the membrane. The protein is ATP synthase epsilon chain of Lacticaseibacillus casei (strain BL23) (Lactobacillus casei).